Consider the following 539-residue polypeptide: Chaperonin GroEL 1 (539 aa).

ATP-binding positions include 30 to 33 (TLGP), lysine 51, 87 to 91 (DGTTT), glycine 415, 480 to 482 (NAA), and aspartate 496.

Belongs to the chaperonin (HSP60) family. Forms a cylinder of 14 subunits composed of two heptameric rings stacked back-to-back. Interacts with the co-chaperonin GroES.

The protein resides in the cytoplasm. The catalysed reaction is ATP + H2O + a folded polypeptide = ADP + phosphate + an unfolded polypeptide.. In terms of biological role, together with its co-chaperonin GroES, plays an essential role in assisting protein folding. The GroEL-GroES system forms a nano-cage that allows encapsulation of the non-native substrate proteins and provides a physical environment optimized to promote and accelerate protein folding. This is Chaperonin GroEL 1 from Erythrobacter litoralis (strain HTCC2594).